Here is a 273-residue protein sequence, read N- to C-terminus: Octanoyltransferase LipM (273 aa).

The BPL/LPL catalytic domain maps to 32-240 (GEIPPTLRFY…GFSEILNIEL (209 aa)). Cysteine 142 functions as the Acyl-thioester intermediate in the catalytic mechanism.

Belongs to the octanoyltransferase LipM family. In terms of assembly, monomer.

The catalysed reaction is octanoyl-[ACP] + L-lysyl-[protein] = N(6)-octanoyl-L-lysyl-[protein] + holo-[ACP] + H(+). It functions in the pathway protein modification; protein lipoylation via endogenous pathway; protein N(6)-(lipoyl)lysine from octanoyl-[acyl-carrier-protein]. Its function is as follows. Catalyzes the transfer of endogenously produced octanoic acid from octanoyl-acyl-carrier-protein onto the lipoyl domain of GcvH, an intermediate carrier during protein lipoylation. This Oceanobacillus iheyensis (strain DSM 14371 / CIP 107618 / JCM 11309 / KCTC 3954 / HTE831) protein is Octanoyltransferase LipM.